Reading from the N-terminus, the 278-residue chain is Tryptophan 2,3-dioxygenase (278 aa).

Substrate contacts are provided by residues 47–51 (FIIQH), Tyr110, and Arg114. His236 lines the heme pocket. A substrate-binding site is contributed by Thr250.

The protein belongs to the tryptophan 2,3-dioxygenase family. As to quaternary structure, homotetramer. Heme serves as cofactor.

It carries out the reaction L-tryptophan + O2 = N-formyl-L-kynurenine. Its pathway is amino-acid degradation; L-tryptophan degradation via kynurenine pathway; L-kynurenine from L-tryptophan: step 1/2. Heme-dependent dioxygenase that catalyzes the oxidative cleavage of the L-tryptophan (L-Trp) pyrrole ring and converts L-tryptophan to N-formyl-L-kynurenine. Catalyzes the oxidative cleavage of the indole moiety. The polypeptide is Tryptophan 2,3-dioxygenase (Ruegeria pomeroyi (strain ATCC 700808 / DSM 15171 / DSS-3) (Silicibacter pomeroyi)).